Consider the following 473-residue polypeptide: Phosphatidylserine synthase 1 (473 aa).

Ala-2 is modified (N-acetylalanine). Residues 2 to 35 (ASCVGSRTLSKDDVNYKMHFRMINEQQVEDITID) lie on the Cytoplasmic side of the membrane. Residues 36 to 56 (FFYRPHTITLLSFTIVSLMYF) traverse the membrane as a helical segment. The Lumenal segment spans residues 57 to 72 (AFTRDDSVPEDNIWRG). Residues 73–93 (ILSVIFFFLIISVLAFPNGPF) traverse the membrane as a helical segment. Residues 94 to 102 (TRPHPALWR) are Cytoplasmic-facing. The chain crosses the membrane as a helical span at residues 103 to 123 (MVFGLSVLYFLFLVFLLFLNF). The Lumenal segment spans residues 124 to 186 (EQVKSLMYWL…AMKALLIRSY (63 aa)). Residues 187–207 (GLCWTISITWELTELFFMHLL) traverse the membrane as a helical segment. Topologically, residues 208-216 (PNFAECWWD) are cytoplasmic. A helical transmembrane segment spans residues 217 to 237 (QVILDILLCNGGGIWLGMVVC). Over 238–286 (RFLEMRTYHWASFKDIHTTTGKIKRAVLQFTPASWTYVRWFDPKSSFQR) the chain is Lumenal. The chain crosses the membrane as a helical span at residues 287–307 (VAGVYLFMIIWQLTELNTFFL). Residues 308–319 (KHIFVFQASHPL) lie on the Cytoplasmic side of the membrane. The chain crosses the membrane as a helical span at residues 320–342 (SWGRILFIGGITAPTVRQYYAYL). Over 343–355 (TDTQCKRVGTQCW) the chain is Lumenal. Residues 356–376 (VFGVIGFLEAIVCIKFGQDLF) form a helical membrane-spanning segment. At 377-383 (SKTQILY) the chain is on the cytoplasmic side. A helical membrane pass occupies residues 384–404 (VVLWLLCVAFTTFLCLYGMIW). Residues 405–473 (YAEHYGHREK…SKVTNGVGKK (69 aa)) lie on the Lumenal side of the membrane. A phosphoserine mark is found at Ser-417, Ser-425, Ser-442, and Ser-454. Residues 430–473 (WHHRKGTKGSEDSPPKHAGNNESHSSRRRNRHSKSKVTNGVGKK) form a disordered region. Residues 455–464 (SRRRNRHSKS) show a composition bias toward basic residues.

The protein belongs to the phosphatidyl serine synthase family.

It localises to the endoplasmic reticulum membrane. The catalysed reaction is a 1,2-diacyl-sn-glycero-3-phosphoethanolamine + L-serine = a 1,2-diacyl-sn-glycero-3-phospho-L-serine + ethanolamine. The enzyme catalyses a 1,2-diacyl-sn-glycero-3-phosphocholine + L-serine = a 1,2-diacyl-sn-glycero-3-phospho-L-serine + choline. It functions in the pathway phospholipid metabolism; phosphatidylserine biosynthesis. Its activity is regulated as follows. Requires calcium ions. Inhibited by exogenous phosphatidylserine. Functionally, catalyzes a base-exchange reaction in which the polar head group of phosphatidylethanolamine (PE) or phosphatidylcholine (PC) is replaced by L-serine. Catalyzes mainly the conversion of phosphatidylcholine. Also converts, in vitro and to a lesser extent, phosphatidylethanolamine. The sequence is that of Phosphatidylserine synthase 1 (PTDSS1) from Homo sapiens (Human).